Consider the following 93-residue polypeptide: Ribonuclease P protein component 1 (93 aa).

Belongs to the eukaryotic/archaeal RNase P protein component 1 family. In terms of assembly, consists of a catalytic RNA component and at least 4-5 protein subunits.

It is found in the cytoplasm. The catalysed reaction is Endonucleolytic cleavage of RNA, removing 5'-extranucleotides from tRNA precursor.. Part of ribonuclease P, a protein complex that generates mature tRNA molecules by cleaving their 5'-ends. The polypeptide is Ribonuclease P protein component 1 (Methanothermobacter thermautotrophicus (strain ATCC 29096 / DSM 1053 / JCM 10044 / NBRC 100330 / Delta H) (Methanobacterium thermoautotrophicum)).